Reading from the N-terminus, the 147-residue chain is D-aminoacyl-tRNA deacylase (147 aa).

The short motif at glycine 136–proline 137 is the Gly-cisPro motif, important for rejection of L-amino acids element.

Belongs to the DTD family. In terms of assembly, homodimer.

The protein localises to the cytoplasm. It catalyses the reaction glycyl-tRNA(Ala) + H2O = tRNA(Ala) + glycine + H(+). It carries out the reaction a D-aminoacyl-tRNA + H2O = a tRNA + a D-alpha-amino acid + H(+). An aminoacyl-tRNA editing enzyme that deacylates mischarged D-aminoacyl-tRNAs. Also deacylates mischarged glycyl-tRNA(Ala), protecting cells against glycine mischarging by AlaRS. Acts via tRNA-based rather than protein-based catalysis; rejects L-amino acids rather than detecting D-amino acids in the active site. By recycling D-aminoacyl-tRNA to D-amino acids and free tRNA molecules, this enzyme counteracts the toxicity associated with the formation of D-aminoacyl-tRNA entities in vivo and helps enforce protein L-homochirality. In Streptococcus agalactiae serotype III (strain NEM316), this protein is D-aminoacyl-tRNA deacylase.